Here is an 859-residue protein sequence, read N- to C-terminus: Rab effector MyRIP (859 aa).

The 121-residue stretch at 4–124 (KLDLSGLTDD…AQSLEWFYNN (121 aa)) folds into the RabBD domain. The segment at 63-105 (CCMRCCSPFTFLVNTKRQCGDCKFNVCKSCCSYQKHEKAWVCC) adopts an FYVE-type zinc-finger fold. A myosin-binding region spans residues 143–560 (RKHRLESGAC…LDTHQVSDDL (418 aa)). The interval 193–209 (VALRVAEEAIEEAISKA) is PKA-binding. Residues 232–248 (LTEELATTILQKIIRKQ) form a negative regulation of PKA-binding region. The disordered stretch occupies residues 251-285 (KSEQQVEEEPGWPHPQSCSTKVADEGTSASPGGYR). At serine 298 the chain carries Phosphoserine. Disordered stretches follow at residues 302–374 (EEAL…KPKS), 386–629 (VASA…SQSV), and 783–812 (DQKQRTQVQTIDTSRQQRRKLPAPPVKAEK). Basic and acidic residues predominate over residues 316 to 326 (QPRDQGQHPRA). Residue serine 350 is modified to Phosphoserine. Positions 393–403 (MGSDSEEDFDW) are enriched in acidic residues. Positions 435-450 (PIAASPSSALSPNPEA) are enriched in low complexity. Composition is skewed to basic and acidic residues over residues 484–494 (AAEKMRLHGEL) and 607–617 (SEPKTESENQK). Positions 495-856 (DVNFNPQLAS…DLMEPALESA (362 aa)) are actin-binding. Composition is skewed to polar residues over residues 618–629 (ESLSSEDNSQSV) and 787–796 (RTQVQTIDTS).

Binds MYO5A, MYO7A and F-actin. Binds RAB27A that has been activated by GTP-binding via its N-terminus. Interacts with PRKAR2A. Interacts with components of the exocyst complex, including EXOC3 and EXOC4. As to expression, detected in brain, skin, heart, adrenal medulla, pancreas, intestine, liver, kidney, muscle and testis.

It localises to the cytoplasm. The protein localises to the perinuclear region. It is found in the cytoplasmic vesicle. The protein resides in the secretory vesicle. Functionally, rab effector protein involved in melanosome transport. Serves as link between melanosome-bound RAB27A and the motor proteins MYO5A and MYO7A. May link RAB27A-containing vesicles to actin filaments. Functions as a protein kinase A-anchoring protein (AKAP). May act as a scaffolding protein that links PKA to components of the exocytosis machinery, thus facilitating exocytosis, including insulin release. In Homo sapiens (Human), this protein is Rab effector MyRIP (MYRIP).